Consider the following 274-residue polypeptide: MPRSPGLFLLLLVLQPLPALGLGLRSAGGRNPECGPCRPERCPEPVRCPVPGIVARDECGCCALCLGAEGASCGGRAGARCGPGLVCASRAAGAAPEGTGLCVCAQRGSVCGSDGRSYPSVCALRLRARQAPRALPGHLHKARDGPCEFAPVVITPPQSVHNVTGAQVYLSCEVRAVPTPVVTWRKVTRSPEGTQVMEELPGDHTNIAVQVQGGPSDHEATAWVLINPLRKEDEGVYQCHSANAVGEAQSHGTVTVVDRSQYRAPRFPAPDDRL.

An N-terminal signal peptide occupies residues 1–21 (MPRSPGLFLLLLVLQPLPALG). The 76-residue stretch at 30 to 105 (RNPECGPCRP…PEGTGLCVCA (76 aa)) folds into the IGFBP N-terminal domain. Cystine bridges form between C34/C59, C37/C61, C42/C62, C48/C65, C73/C87, C81/C102, and C111/C147. In terms of domain architecture, Kazal-like spans 91 to 149 (AAGAAPEGTGLCVCAQRGSVCGSDGRSYPSVCALRLRARQAPRALPGHLHKARDGPCEF). The Ig-like C2-type domain occupies 151–255 (PVVITPPQSV…GEAQSHGTVT (105 aa)). N162 carries an N-linked (GlcNAc...) asparagine glycan. C172 and C239 form a disulfide bridge.

It is found in the secreted. In terms of biological role, IGF-binding proteins prolong the half-life of IGFs and have been shown to either inhibit or stimulate the growth promoting effects of the IGFs in cell culture. They alter the interaction of IGFs with their cell surface receptors. The protein is Insulin-like growth factor-binding protein-like 1 (IGFBPL1) of Bos taurus (Bovine).